The following is a 296-amino-acid chain: Glycine--tRNA ligase alpha subunit (296 aa).

This sequence belongs to the class-II aminoacyl-tRNA synthetase family. In terms of assembly, tetramer of two alpha and two beta subunits.

The protein localises to the cytoplasm. It catalyses the reaction tRNA(Gly) + glycine + ATP = glycyl-tRNA(Gly) + AMP + diphosphate. In Desulfitobacterium hafniense (strain Y51), this protein is Glycine--tRNA ligase alpha subunit.